The primary structure comprises 162 residues: Ribosome maturation factor RimP (162 aa).

Belongs to the RimP family.

The protein localises to the cytoplasm. Functionally, required for maturation of 30S ribosomal subunits. The polypeptide is Ribosome maturation factor RimP (Ralstonia pickettii (strain 12J)).